Consider the following 230-residue polypeptide: MSLGNTTVVTTTVRNATPSLTLDAGTIERFLAHSHRRRYPTRTDVFRPGDPAGTLYYVISGSVSIIAEEDDDRELVLGYFGSGEFVGEMGLFIESDTREVILRTRTQCELAEISYERLQQLFQTSLSPDAPRILYAIGVQLSKRLLDTTRKASRLAFLDVTDRIVRTLHDLSKEPEAMSHPQGTQLRVSRQELARLVGCSREMAGRVLKKLQADGLLHARGKTVVLYGTR.

Residue 18 to 139 (PSLTLDAGTI…APRILYAIGV (122 aa)) coordinates a nucleoside 3',5'-cyclic phosphate. The 73-residue stretch at 158 to 230 (LDVTDRIVRT…GKTVVLYGTR (73 aa)) folds into the HTH crp-type domain. Residues 190–209 (RQELARLVGCSREMAGRVLK) constitute a DNA-binding region (H-T-H motif).

In terms of assembly, homodimer.

Its subcellular location is the cytoplasm. With respect to regulation, allosterically inhibited by cyclic di-GMP (c-di-GMP), which binds to Clp and abolishes its ability to bind its target gene promoter. Global transcriptional regulator that regulates virulence factors production by activating or repressing the expression of a large set of genes in diffusible signal factor (DSF) pathway. This chain is CRP-like protein Clp (clp), found in Xanthomonas campestris pv. campestris (strain 8004).